Consider the following 343-residue polypeptide: ATP-dependent (S)-NAD(P)H-hydrate dehydratase (343 aa).

The transit peptide at 1-42 directs the protein to the mitochondrion; that stretch reads MAVCPYGAAAVVMALLSAAIAFHCSPLLAVLQRALSLHTAHA. The YjeF C-terminal domain occupies 49–340; sequence LFQLVRNIVP…AEVGAAFSKL (292 aa). Lysine 63 is modified (N6-acetyllysine). Tyrosine 81 is modified (phosphotyrosine). Residues glycine 149 and 202 to 208 each bind (6S)-NADPHX; that span reads NHVEFSR. ATP is bound by residues 242–246 and 261–270; these read KGEQD and GSSRRCGGQG. Position 271 (aspartate 271) interacts with (6S)-NADPHX.

The protein belongs to the NnrD/CARKD family. The cofactor is Mg(2+).

Its subcellular location is the mitochondrion. The catalysed reaction is (6S)-NADHX + ATP = ADP + phosphate + NADH + H(+). It catalyses the reaction (6S)-NADPHX + ATP = ADP + phosphate + NADPH + H(+). Its function is as follows. Catalyzes the dehydration of the S-form of NAD(P)HX at the expense of ATP, which is converted to ADP. Together with NAD(P)HX epimerase, which catalyzes the epimerization of the S- and R-forms, the enzyme allows the repair of both epimers of NAD(P)HX, a damaged form of NAD(P)H that is a result of enzymatic or heat-dependent hydration. This Rattus norvegicus (Rat) protein is ATP-dependent (S)-NAD(P)H-hydrate dehydratase.